A 223-amino-acid polypeptide reads, in one-letter code: Ethylene-inducing xylanase 1 (223 aa).

Positions 1–19 (MVSFTSLLAAFSVVSGVLT) are cleaved as a signal peptide. The GH11 domain occupies 34 to 223 (KRTPSSTGTS…SSGSATMTVS (190 aa)). E119 functions as the Nucleophile in the catalytic mechanism. Positions 174 to 184 (RRTKRTSGSVN) are nuclear localization signal. The active-site Proton donor is the E210.

The protein belongs to the glycosyl hydrolase 11 (cellulase G) family.

The protein localises to the secreted. It is found in the host nucleus. The enzyme catalyses Endohydrolysis of (1-&gt;4)-beta-D-xylosidic linkages in xylans.. It participates in glycan degradation; xylan degradation. Functionally, endo-1,4-beta-xylanase involved in the hydrolysis of xylan, a major structural heterogeneous polysaccharide found in plant biomass representing the second most abundant polysaccharide in the biosphere, after cellulose. Acts as an effector that localizes to the host nucleus to contribute to the virulence process. Induces host innate immunity responses; triggers BAK1-and SOBIR1-dependent cell death, salicylic acid signaling and jasmonic acid signaling. Does not exhibit any cell death when transiently expressed in N.benthamiana. The protein is Ethylene-inducing xylanase 1 of Verticillium dahliae (strain VdLs.17 / ATCC MYA-4575 / FGSC 10137) (Verticillium wilt).